We begin with the raw amino-acid sequence, 77 residues long: Acyl carrier protein (77 aa).

In terms of domain architecture, Carrier spans 1–76; the sequence is MSLEDDVKAI…DVIKYIQERQ (76 aa). S36 carries the O-(pantetheine 4'-phosphoryl)serine modification.

It belongs to the acyl carrier protein (ACP) family. Post-translationally, 4'-phosphopantetheine is transferred from CoA to a specific serine of apo-ACP by AcpS. This modification is essential for activity because fatty acids are bound in thioester linkage to the sulfhydryl of the prosthetic group.

It localises to the cytoplasm. Its pathway is lipid metabolism; fatty acid biosynthesis. Its function is as follows. Carrier of the growing fatty acid chain in fatty acid biosynthesis. This is Acyl carrier protein from Chlamydia trachomatis serovar A (strain ATCC VR-571B / DSM 19440 / HAR-13).